The sequence spans 113 residues: Ig heavy chain V region 36-60 (113 aa).

This is Ig heavy chain V region 36-60 from Mus musculus (Mouse).